Here is a 276-residue protein sequence, read N- to C-terminus: Large ribosomal subunit protein uL2 (276 aa).

The interval 223–276 (AVMNPVDHPHGGGEGKNSVGRKSPLTPWGKPALGIKTRGRKTSDKFIVRRRNEK) is disordered. Residues 263–276 (KTSDKFIVRRRNEK) show a composition bias toward basic and acidic residues.

The protein belongs to the universal ribosomal protein uL2 family. In terms of assembly, part of the 50S ribosomal subunit. Forms a bridge to the 30S subunit in the 70S ribosome.

In terms of biological role, one of the primary rRNA binding proteins. Required for association of the 30S and 50S subunits to form the 70S ribosome, for tRNA binding and peptide bond formation. It has been suggested to have peptidyltransferase activity; this is somewhat controversial. Makes several contacts with the 16S rRNA in the 70S ribosome. The chain is Large ribosomal subunit protein uL2 from Fusobacterium nucleatum subsp. nucleatum (strain ATCC 25586 / DSM 15643 / BCRC 10681 / CIP 101130 / JCM 8532 / KCTC 2640 / LMG 13131 / VPI 4355).